A 476-amino-acid chain; its full sequence is Glycogen synthase (476 aa).

Lys15 serves as a coordination point for ADP-alpha-D-glucose.

Belongs to the glycosyltransferase 1 family. Bacterial/plant glycogen synthase subfamily.

It catalyses the reaction [(1-&gt;4)-alpha-D-glucosyl](n) + ADP-alpha-D-glucose = [(1-&gt;4)-alpha-D-glucosyl](n+1) + ADP + H(+). It participates in glycan biosynthesis; glycogen biosynthesis. In terms of biological role, synthesizes alpha-1,4-glucan chains using ADP-glucose. This Yersinia pseudotuberculosis serotype O:1b (strain IP 31758) protein is Glycogen synthase.